Consider the following 92-residue polypeptide: Small ribosomal subunit protein uS19c (92 aa).

The protein belongs to the universal ribosomal protein uS19 family.

The protein resides in the plastid. The protein localises to the chloroplast. Functionally, protein S19 forms a complex with S13 that binds strongly to the 16S ribosomal RNA. In Pyropia yezoensis (Susabi-nori), this protein is Small ribosomal subunit protein uS19c.